The following is a 224-amino-acid chain: Cytidylate kinase (224 aa).

11 to 19 (GPAAAGKST) lines the ATP pocket.

This sequence belongs to the cytidylate kinase family. Type 1 subfamily.

The protein localises to the cytoplasm. The enzyme catalyses CMP + ATP = CDP + ADP. The catalysed reaction is dCMP + ATP = dCDP + ADP. This is Cytidylate kinase from Listeria welshimeri serovar 6b (strain ATCC 35897 / DSM 20650 / CCUG 15529 / CIP 8149 / NCTC 11857 / SLCC 5334 / V8).